A 611-amino-acid polypeptide reads, in one-letter code: Elongation factor 4 (611 aa).

One can recognise a tr-type G domain in the interval 11–193 (EKIRNFSIIA…QVVEYVPAPS (183 aa)). GTP contacts are provided by residues 23-28 (DHGKST) and 140-143 (NKID).

This sequence belongs to the TRAFAC class translation factor GTPase superfamily. Classic translation factor GTPase family. LepA subfamily.

The protein resides in the cell membrane. It catalyses the reaction GTP + H2O = GDP + phosphate + H(+). Functionally, required for accurate and efficient protein synthesis under certain stress conditions. May act as a fidelity factor of the translation reaction, by catalyzing a one-codon backward translocation of tRNAs on improperly translocated ribosomes. Back-translocation proceeds from a post-translocation (POST) complex to a pre-translocation (PRE) complex, thus giving elongation factor G a second chance to translocate the tRNAs correctly. Binds to ribosomes in a GTP-dependent manner. This Enterococcus faecalis (strain ATCC 700802 / V583) protein is Elongation factor 4.